Consider the following 306-residue polypeptide: Grixazone synthase (306 aa).

Residues H39, H58, H67, H222, H226, and H248 each contribute to the Cu(2+) site.

Belongs to the tyrosinase family. It depends on Cu(2+) as a cofactor.

The catalysed reaction is 2 3-amino-4-hydroxybenzoate + N-acetyl-L-cysteine + 2 O2 + H(+) = grixazone B + CO2 + 4 H2O. It catalyses the reaction 2 3-amino-4-hydroxybenzaldehyde + N-acetyl-L-cysteine + 2 O2 = grixazone A + formate + 3 H2O + H(+). The enzyme catalyses 4 2-aminophenol + 3 O2 = 2 2-aminophenoxazin-3-one + 6 H2O. Its activity is regulated as follows. Inhibited by 3-amino-4-hydroxybenzensulfonic acid, 4-hydroxy-3-nitrobenzaldehyde, L-tyrosine, p-hydroxybenzaldehyde. Activated by the copper chaperone GriE. Its function is as follows. Involved in the biosynthesis of the parasiticide antibiotic grixazone. Catalyzes the oxidation of 3-amino-4-hydroxybenzoate (3,4-AHBOA) to yield the corresponding quinone imine which is then non-enzymatically conjugated with the thiol group of N-acetylcysteine. The resultant compound is oxidized to its quinone imine enzymatically and is then dimerized non-enzymatically with another quinone imine oxidized by GriF to yield grixazone B. 3-amino-4-hydroxybenzaldehyde (3,4-AHBAL) can also be used as substrate to yield grixazone A. In the grixazone biosynthetic pathway, it can also function as an o-aminophenol oxidase that catalyzes the formation of the phenoxazinone chromophore from alpha-aminophenol. It can also use 2-amino-4-methylphenol, and to a lesser extent, 3,4-dihydroxybenzaldehyde, catechol and 3,4-dihydroxy-L-phenylalanine (L-DOPA) as substrates. In contrast to tyrosinases, it does not display monophenolase activity. This is Grixazone synthase from Streptomyces griseus subsp. griseus (strain JCM 4626 / CBS 651.72 / NBRC 13350 / KCC S-0626 / ISP 5235).